A 552-amino-acid polypeptide reads, in one-letter code: uncharacterized protein (552 aa).

It belongs to the transposase 25 family.

This is an uncharacterized protein from Sinorhizobium fredii (strain NBRC 101917 / NGR234).